Reading from the N-terminus, the 180-residue chain is Chromosome-anchoring protein RacA (180 aa).

The segment at residues 5–25 is a DNA-binding region (H-T-H motif); sequence TPFIAKKLGVSPKAVVRIAQQ. The stretch at 67–151 forms a coiled coil; it reads KASSNEVEEL…LEAALTKEEP (85 aa).

The protein belongs to the RacA family.

The protein localises to the cytoplasm. Functionally, required for the formation of axial filaments and for anchoring the origin regions at the cell poles in sporulating cells, thus ensuring proper chromosome segregation in the prespore. Binds in a dispersed manner throughout the chromosome but preferentially to sites clustered in the origin portion of the chromosome, causing condensation of the chromosome and its remodeling into an elongated, anchored structure. The polypeptide is Chromosome-anchoring protein RacA (Bacillus cereus (strain B4264)).